Here is a 454-residue protein sequence, read N- to C-terminus: MAEFSQKQRKQSGSEGLGSVVDFLLANARLVLGVGGAAVLGIATLAVKRLIDRATSPPDEDDTKGDSWKELSLLRATSPQKPQPPPAAFSQPLATGSPSPSVPVEPTPIHSPTTPKFSTIAPLCLTFQERLLAFERKHVITPEAHVTLAKQLAGDIALELQAYLRSKFPELPFGALVPGGPLYDGLQAGTAEHVRLLAPLELEPGLWSLVPGVDTVAREPRCWAVRRTQLEFHPRGCSPWDRFLVGGYLSSRVLLELLRKALSASVNWPAIGSLLGCLIWPDVASEELLLKVQHECLEFTLAVLMVVPGASTDDRLLLAWPLEGLASNLWLQDLYPVETARLRALDDQDAGTRRRLLLLLCGICRGHPALVRLGWSHLTQVVLHLGEEEVAWTEEALGERFLQALEFLVGSLEQASLPCHFNPSVNLLGNFREEEIDDIGYVLYSGLQVPESLF.

At 1–22 the chain is on the mitochondrial intermembrane side; sequence MAEFSQKQRKQSGSEGLGSVVD. A helical transmembrane segment spans residues 23-43; that stretch reads FLLANARLVLGVGGAAVLGIA. Residues 44–454 lie on the Cytoplasmic side of the membrane; that stretch reads TLAVKRLIDR…SGLQVPESLF (411 aa). The segment at 76–113 is disordered; the sequence is ATSPQKPQPPPAAFSQPLATGSPSPSVPVEPTPIHSPT.

This sequence belongs to the MID49/MID51 family. In terms of assembly, interacts with DNM1L.

The protein localises to the mitochondrion outer membrane. In terms of biological role, mitochondrial outer membrane protein which regulates mitochondrial organization. It is required for mitochondrial fission and promotes the recruitment and association of the fission mediator dynamin-related protein 1 (DNM1L) to the mitochondrial surface independently of the mitochondrial fission FIS1 and MFF proteins. Regulates DNM1L GTPase activity. This Mus musculus (Mouse) protein is Mitochondrial dynamics protein MID49 (Mief2).